The chain runs to 497 residues: Cytochrome P450 monooxygenase cicH (497 aa).

A helical membrane pass occupies residues 2–19 (AILVRLFFALFVVSVYFF). Residue Cys439 participates in heme binding. N-linked (GlcNAc...) asparagine glycosylation occurs at Asn443.

The protein belongs to the cytochrome P450 family. The cofactor is heme.

It localises to the membrane. It participates in phytotoxin biosynthesis. In terms of biological role, cytochrome P450 monooxygenase; part of the gene cluster that mediates the biosynthesis of cichorine, a phytotoxin active against knapweed, corn, and soybeans. The first step in the pathway is performed by the non-reducing polyketide synthase pkbA that condenses one acetyl-CoA starter unit with 3 malonyl-CoA units. PkbA also catalyzes one methylation step to produce 3-methylorsellinate. The nonribosomal peptide synthase-like protein cicB, the cytochrome P450 monooxygenase cicH and the O-methyltransferase cicE are involved in the conversion of 3-methylorsellinate into nidulol. CicB converts 3-methylorsellinate to a yet unidentified intermediate, cicH may play a ring-closing role for cichorine and cicE is plausibly responsible for the methylation of one of the phenol groups. The oxidoreductase cicC acts downstream with still unidentified enzymes to further convert nidulol into cichorine. This chain is Cytochrome P450 monooxygenase cicH, found in Emericella nidulans (strain FGSC A4 / ATCC 38163 / CBS 112.46 / NRRL 194 / M139) (Aspergillus nidulans).